The sequence spans 450 residues: 3',5'-cyclic-AMP phosphodiesterase 7B (450 aa).

The PDEase domain occupies 97–420; the sequence is LDEDYLGQAR…AQWKSLLPRQ (324 aa). Catalysis depends on histidine 173, which acts as the Proton donor. Residues histidine 177, histidine 213, aspartate 214, and aspartate 323 each coordinate a divalent metal cation. Residues 418–450 form a disordered region; sequence PRQHRSRGSSGSGPDHDHAGQGTESEEQEGDSP. Serine 426 carries the phosphoserine modification. The segment covering 441 to 450 has biased composition (acidic residues); sequence ESEEQEGDSP.

This sequence belongs to the cyclic nucleotide phosphodiesterase family. PDE7 subfamily. Requires a divalent metal cation as cofactor. Highly expressed in brain. Also expressed in heart, liver, skeletal muscle and pancreas.

The catalysed reaction is 3',5'-cyclic AMP + H2O = AMP + H(+). The protein operates within purine metabolism; 3',5'-cyclic AMP degradation; AMP from 3',5'-cyclic AMP: step 1/1. Inhibited by dipyridamole, IBMX and SCH 51866. Insensitive to zaprinast, rolipram, and milrinone. Functionally, hydrolyzes the second messenger cAMP, which is a key regulator of many important physiological processes. May be involved in the control of cAMP-mediated neural activity and cAMP metabolism in the brain. The protein is 3',5'-cyclic-AMP phosphodiesterase 7B of Homo sapiens (Human).